Consider the following 509-residue polypeptide: Cobyric acid synthase (509 aa).

In terms of domain architecture, GATase cobBQ-type spans 262 to 459 (EIKVGIIKLP…IHGIFENDSW (198 aa)). Cysteine 343 functions as the Nucleophile in the catalytic mechanism. The active site involves histidine 451.

This sequence belongs to the CobB/CobQ family. CobQ subfamily.

It participates in cofactor biosynthesis; adenosylcobalamin biosynthesis. Its function is as follows. Catalyzes amidations at positions B, D, E, and G on adenosylcobyrinic A,C-diamide. NH(2) groups are provided by glutamine, and one molecule of ATP is hydrogenolyzed for each amidation. This Prochlorococcus marinus (strain MIT 9301) protein is Cobyric acid synthase.